The chain runs to 205 residues: MAASTASHRPIKGILKNKTSTTSSVVASAEQPRRTVEEELSKKSQKWDEMNILATYHPADKDYGLMKIDEPDTPYHNMIGDDEDVCSDSEGNEVMTPEILAKKLAAAEGSEPKFRTREQESSGEEDNDLSPEEREKKRQFEMKRKLHYNEGLNIKLARQLISKDLHDDDEDEEMSETADADSMNIEESNQGSTAGDHLQHKSQSS.

A disordered region spans residues 1–44 (MAASTASHRPIKGILKNKTSTTSSVVASAEQPRRTVEEELSKKS). N-acetylalanine is present on alanine 2. Residues 12–17 (KGILKN) form a required for binding PPP1CC region. Positions 19–29 (TSTTSSVVASA) are enriched in low complexity. Basic and acidic residues predominate over residues 31–44 (QPRRTVEEELSKKS). Residues 43–55 (KSQKWDEMNILAT) form a required for binding PPP1CC region. Serine 44 bears the Phosphoserine; by ATM mark. Threonine 73 carries the phosphothreonine; by GSK3 modification. 2 positions are modified to phosphoserine: serine 87 and serine 89. A phosphothreonine mark is found at threonine 96 and threonine 116. The segment at 104–142 (LAAAEGSEPKFRTREQESSGEEDNDLSPEEREKKRQFEM) is disordered. Over residues 110–120 (SEPKFRTREQE) the composition is skewed to basic and acidic residues. Phosphoserine occurs at positions 121, 122, and 130. Residues 121-130 (SSGEEDNDLS) are compositionally biased toward acidic residues. The span at 131–142 (PEEREKKRQFEM) shows a compositional bias: basic and acidic residues. Residues 147 to 150 (HYNE) form a required for binding PPP1CC catalytic center, displacing metal ions and inhibition of PPP1CC catalytic activity region. Residues 163–205 (KDLHDDDEDEEMSETADADSMNIEESNQGSTAGDHLQHKSQSS) form a disordered region. Acidic residues predominate over residues 167-179 (DDDEDEEMSETAD).

This sequence belongs to the protein phosphatase inhibitor 2 family. Heterodimer with PP1. Post-translationally, phosphorylation on Ser-44 by ATM activates PP1 by dissociating the PP1-PPP1R2 complex. Phosphorylation on Thr-73 by GSK3 activates PP1 by dissociating the PP1-PPP1R2 complex. As to expression, central nervous system.

Inhibitor of protein-phosphatase 1. The chain is Protein phosphatase inhibitor 2 (Ppp1r2) from Rattus norvegicus (Rat).